Consider the following 485-residue polypeptide: NADH-quinone oxidoreductase subunit N (485 aa).

The next 14 membrane-spanning stretches (helical) occupy residues 8 to 28 (LIAL…MLSI), 35 to 55 (FLNA…LWFV), 71 to 91 (GFAM…CTFA), 105 to 125 (FYLL…ANHL), 127 to 147 (SLFL…GYAF), 159 to 179 (YTIL…LVYA), 203 to 223 (LLAG…LVPF), 235 to 255 (PAPV…GVVM), 271 to 291 (VVLA…ALSQ), 297 to 317 (LLGY…IALQ), 326 to 346 (VGVY…VVSL), 373 to 393 (AAVM…LGFI), 408 to 430 (WWLV…RVAV), and 455 to 475 (IVVL…QPLI).

It belongs to the complex I subunit 2 family. NDH-1 is composed of 13 different subunits. Subunits NuoA, H, J, K, L, M, N constitute the membrane sector of the complex.

The protein localises to the cell inner membrane. It catalyses the reaction a quinone + NADH + 5 H(+)(in) = a quinol + NAD(+) + 4 H(+)(out). In terms of biological role, NDH-1 shuttles electrons from NADH, via FMN and iron-sulfur (Fe-S) centers, to quinones in the respiratory chain. The immediate electron acceptor for the enzyme in this species is believed to be ubiquinone. Couples the redox reaction to proton translocation (for every two electrons transferred, four hydrogen ions are translocated across the cytoplasmic membrane), and thus conserves the redox energy in a proton gradient. The polypeptide is NADH-quinone oxidoreductase subunit N (Shigella flexneri).